Consider the following 557-residue polypeptide: Calcium-dependent protein kinase 4 (557 aa).

A disordered region spans residues 1 to 72; it reads MGNTCRGSIG…LVSPRKASMN (72 aa). The N-myristoyl glycine moiety is linked to residue Gly2. Polar residues predominate over residues 15–27; sequence QGYTQPEDSSCST. A compositionally biased stretch (low complexity) spans 28–48; sequence NHNPSSGNSYSSSDNFSPTSN. The Protein kinase domain occupies 94–352; sequence YTLGRKLGQG…AHEVLCHPWI (259 aa). ATP-binding positions include 100–108 and Lys123; that span reads LGQGQFGTT. The active-site Proton acceptor is Asp218. The tract at residues 358–388 is autoinhibitory domain; it reads APDRALDPAVLSRLKQFSAMNKLKKMALRVI. EF-hand domains lie at 395 to 430, 431 to 466, 467 to 502, and 506 to 536; these read EEIA…YGST, LKDT…LNKL, EREE…HNMT, and FEDI…GNPC. Asp408, Asp410, Ser412, Glu419, Asp444, Asp446, Ser448, Thr450, Glu455, Asp480, Asp482, Ser484, Tyr486, Glu491, Asp514, Asp516, Asp518, Arg520, and Glu525 together coordinate Ca(2+).

It belongs to the protein kinase superfamily. Ser/Thr protein kinase family. CDPK subfamily.

It localises to the membrane. It carries out the reaction L-seryl-[protein] + ATP = O-phospho-L-seryl-[protein] + ADP + H(+). The catalysed reaction is L-threonyl-[protein] + ATP = O-phospho-L-threonyl-[protein] + ADP + H(+). Activated by calcium. Autophosphorylation may play an important role in the regulation of the kinase activity. Its function is as follows. Regulates the production of reactive oxygen species (ROS) by NADPH oxidase. The sequence is that of Calcium-dependent protein kinase 4 (CPK4) from Solanum tuberosum (Potato).